Here is a 716-residue protein sequence, read N- to C-terminus: Putative mannosyltransferase YkcB (716 aa).

Helical transmembrane passes span 8–28 (LDIV…YNIW), 44–64 (MMQS…FITV), 87–107 (SVIL…YLLI), 118–135 (IASF…VART), 137–157 (NVDA…FKAI), 159–179 (KGKL…FNTK), 180–200 (MLQA…AANA), and 206–226 (IVSL…WPLI). The interval 260–363 (TGQNSGGGQG…GSGMFGTGTP (104 aa)) is disordered. Polar residues predominate over residues 278 to 289 (EMSSSDNTQAPP). A compositionally biased stretch (low complexity) spans 290 to 307 (NQSSSNSSSSDGKSSNGN). Residues 318–347 (PSGGQGGPPSGGDGGQGGPGGDGGKGGTGT) show a composition bias toward gly residues. 6 consecutive transmembrane segments (helical) span residues 376 to 396 (QISW…IAGA), 409 to 429 (TVFW…AEFF), 433 to 453 (YLIM…VALV), 462 to 482 (WKAW…LFIL), 491 to 511 (VGWS…LLLF), and 518 to 538 (FSYY…MYWA). Positions 664–716 (VASEKWQSSSDQKTENTDSADTSSSKASGENGKMGGPGGMNQSATLYELHADE) are disordered. The segment covering 680–694 (TDSADTSSSKASGEN) has biased composition (low complexity).

Belongs to the glycosyltransferase 39 family.

The protein localises to the cell membrane. The chain is Putative mannosyltransferase YkcB (ykcB) from Bacillus subtilis (strain 168).